We begin with the raw amino-acid sequence, 431 residues long: Glucose-1-phosphate adenylyltransferase (431 aa).

Lys-39 contributes to the beta-D-fructose 1,6-bisphosphate binding site. Residues Arg-40, His-46, and Arg-52 each contribute to the AMP site. Tyr-114 serves as a coordination point for alpha-D-glucose 1-phosphate. Arg-130 contributes to the AMP binding site. Alpha-D-glucose 1-phosphate is bound by residues Gly-179, 194–195 (EK), and Ser-212. Positions 370 and 386 each coordinate AMP. Residues 419-423 (REMLR) and 429-431 (QER) contribute to the beta-D-fructose 1,6-bisphosphate site.

It belongs to the bacterial/plant glucose-1-phosphate adenylyltransferase family. Homotetramer.

The enzyme catalyses alpha-D-glucose 1-phosphate + ATP + H(+) = ADP-alpha-D-glucose + diphosphate. The protein operates within glycan biosynthesis; glycogen biosynthesis. Allosterically activated by fructose-1,6-bisphosphate (F16BP) and inhibited by AMP. Involved in the biosynthesis of ADP-glucose, a building block required for the elongation reactions to produce glycogen. Catalyzes the reaction between ATP and alpha-D-glucose 1-phosphate (G1P) to produce pyrophosphate and ADP-Glc. The chain is Glucose-1-phosphate adenylyltransferase from Salmonella arizonae (strain ATCC BAA-731 / CDC346-86 / RSK2980).